Consider the following 340-residue polypeptide: S-adenosylmethionine:tRNA ribosyltransferase-isomerase (340 aa).

This sequence belongs to the QueA family. In terms of assembly, monomer.

It localises to the cytoplasm. It carries out the reaction 7-aminomethyl-7-carbaguanosine(34) in tRNA + S-adenosyl-L-methionine = epoxyqueuosine(34) in tRNA + adenine + L-methionine + 2 H(+). It functions in the pathway tRNA modification; tRNA-queuosine biosynthesis. Transfers and isomerizes the ribose moiety from AdoMet to the 7-aminomethyl group of 7-deazaguanine (preQ1-tRNA) to give epoxyqueuosine (oQ-tRNA). The polypeptide is S-adenosylmethionine:tRNA ribosyltransferase-isomerase (Francisella tularensis subsp. tularensis (strain FSC 198)).